The chain runs to 173 residues: Translation initiation factor IF-3 (173 aa).

This sequence belongs to the IF-3 family. Monomer.

It is found in the cytoplasm. Functionally, IF-3 binds to the 30S ribosomal subunit and shifts the equilibrium between 70S ribosomes and their 50S and 30S subunits in favor of the free subunits, thus enhancing the availability of 30S subunits on which protein synthesis initiation begins. The polypeptide is Translation initiation factor IF-3 (Lactiplantibacillus plantarum (strain ATCC BAA-793 / NCIMB 8826 / WCFS1) (Lactobacillus plantarum)).